A 279-amino-acid chain; its full sequence is Proteasome subunit beta (279 aa).

Residues 1 to 51 (MTFDASGRLPEAFLTPGGSSFMDFLAGHAPDLLPGRRSLGTGDLSKDVPHG) constitute a propeptide, removed in mature form; by autocatalysis. Thr52 functions as the Nucleophile in the catalytic mechanism.

This sequence belongs to the peptidase T1B family. In terms of assembly, the 20S proteasome core is composed of 14 alpha and 14 beta subunits that assemble into four stacked heptameric rings, resulting in a barrel-shaped structure. The two inner rings, each composed of seven catalytic beta subunits, are sandwiched by two outer rings, each composed of seven alpha subunits. The catalytic chamber with the active sites is on the inside of the barrel. Has a gated structure, the ends of the cylinder being occluded by the N-termini of the alpha-subunits. Is capped by the proteasome-associated ATPase, ARC.

It localises to the cytoplasm. It carries out the reaction Cleavage of peptide bonds with very broad specificity.. The protein operates within protein degradation; proteasomal Pup-dependent pathway. With respect to regulation, the formation of the proteasomal ATPase ARC-20S proteasome complex, likely via the docking of the C-termini of ARC into the intersubunit pockets in the alpha-rings, may trigger opening of the gate for substrate entry. Interconversion between the open-gate and close-gate conformations leads to a dynamic regulation of the 20S proteasome proteolysis activity. Functionally, component of the proteasome core, a large protease complex with broad specificity involved in protein degradation. This is Proteasome subunit beta from Kribbella flavida (strain DSM 17836 / JCM 10339 / NBRC 14399).